A 275-amino-acid polypeptide reads, in one-letter code: Elongation factor Ts (275 aa).

An Isoglutamyl lysine isopeptide (Lys-Gln) (interchain with Q-Cter in protein Pup) cross-link involves residue K36. Residues 76 to 79 are involved in Mg(2+) ion dislocation from EF-Tu; the sequence is TDFV.

This sequence belongs to the EF-Ts family.

It is found in the cytoplasm. In terms of biological role, associates with the EF-Tu.GDP complex and induces the exchange of GDP to GTP. It remains bound to the aminoacyl-tRNA.EF-Tu.GTP complex up to the GTP hydrolysis stage on the ribosome. In Mycolicibacterium smegmatis (strain ATCC 700084 / mc(2)155) (Mycobacterium smegmatis), this protein is Elongation factor Ts.